The sequence spans 527 residues: F-box protein SKIP2 (527 aa).

Residues 39–85 (DRDFTGDLPDECLAHVFQFLGAGDRKRCSLVCKRWLLVDGQSRHRLS) enclose the F-box domain.

As to quaternary structure, part of a SCF (ASK-cullin-F-box) protein ligase complex. Interacts with SKP1A/ASK1, SKP1B/ASK2 and ASK11.

The protein resides in the nucleus. It functions in the pathway protein modification; protein ubiquitination. In terms of biological role, component of SCF(ASK-cullin-F-box) E3 ubiquitin ligase complexes, which may mediate the ubiquitination and subsequent proteasomal degradation of target proteins. In Arabidopsis thaliana (Mouse-ear cress), this protein is F-box protein SKIP2 (SKIP2).